The sequence spans 410 residues: Zinc finger protein 322 (410 aa).

C2H2-type zinc fingers lie at residues 81-103 (YRCD…QRIH), 109-131 (YKCS…QRTH), 137-159 (YTCD…QRSH), 165-187 (YLCN…RRTH), 193-215 (FKCL…QRTH), 221-243 (YKCN…KRVH), 249-271 (YKCG…QRVH), and 277-299 (YKCL…QATH). A C2H2-type 9; degenerate zinc finger spans residues 303–325 (FKCLEYEKSFNCSSDFIVHQRIH). A C2H2-type 10; degenerate zinc finger spans residues 361-383 (YKYSVCDKTFHHSSALLQHQTVH). At serine 400 the chain carries Phosphoserine.

This sequence belongs to the krueppel C2H2-type zinc-finger protein family. In terms of assembly, interacts with POU5F1.

Its subcellular location is the nucleus. It localises to the cytoplasm. Its function is as follows. Transcriptional activator. Important for maintenance of pluripotency in embryonic stem cells. Binds directly to the POU5F1 distal enhancer and the NANOG proximal promoter, and enhances expression of both genes. Can also bind to numerous other gene promoters and regulates expression of many other pluripotency factors, either directly or indirectly. Promotes inhibition of MAPK signaling during embryonic stem cell differentiation. This chain is Zinc finger protein 322 (Znf322), found in Mus musculus (Mouse).